Consider the following 471-residue polypeptide: MPAKGVIQEIIGVVIRAKFPEDQVPEIYNAIEIPLEQGGRLVCEVQQQLGNGVVKAVAMGSTDGLRRGLEVIDTGRPIAVPVGPATLGRVFNVLGDPIDGGPPFGPEVERRPIHRDPPSFEEQSTQAQIFETGIKVIDLIAPFTRGGKTAIFGGAGVGKTVVIQELIANIAKEQSGFSVFAGVGERSREGNDLIHEMREARIDENTTVFDKTIMVFGQMNEPPGARLRVGLTALTMAEYFRDQGRDILLFIDNIFRFVQAGSEVSSLLGRMPSQVGYQPTLGTEMGELQERITSTKRGSITSMQAVYVPADDYTDPAPATVFSHLDATISLERSIAERAIFPAVDPLASTSRILDPNIVGEEHYRVAQEVKRVLQRYKDLKDIIAILGMEELSDEDKLTVQRARKIELFFSQPFTVAQQFTGRPGKYVPVKKTVESFARLLNGEGDHIPESFFYMQGDFDDVLAAYEASQK.

Residue 153–160 (GGAGVGKT) coordinates ATP.

It belongs to the ATPase alpha/beta chains family. F-type ATPases have 2 components, CF(1) - the catalytic core - and CF(0) - the membrane proton channel. CF(1) has five subunits: alpha(3), beta(3), gamma(1), delta(1), epsilon(1). CF(0) has four main subunits: a(1), b(1), b'(1) and c(9-12).

It is found in the cell membrane. The catalysed reaction is ATP + H2O + 4 H(+)(in) = ADP + phosphate + 5 H(+)(out). Produces ATP from ADP in the presence of a proton gradient across the membrane. The catalytic sites are hosted primarily by the beta subunits. This is ATP synthase subunit beta from Chloroflexus aggregans (strain MD-66 / DSM 9485).